A 408-amino-acid polypeptide reads, in one-letter code: MKNQLIDRLTRYTTIDTQSDPKSTTTPSTEKQWDLLHLLEKELQQLGLPTDLDENGYLFATLESNIDADVPTVGFLAHVDTSPDFNASNVKPQIIENYDGKPYKLGNTKRVLDPKVFPELNSLVGHTLMVTDGTSLLGADDKAGIVEIMEAICYLQEHPEIKHGTIRIGFTPDEEIGRGPHKFDVDRFNADFAYTMDGSQYGELQYESFNAAEAVITCHGVNVHPGSAKNAMVNAIRLGEQFDSLLPDSEVPERTEGYEGFYHLMNFEGTVEKATLQYIIRDHDKKQFELRKKRILEIRDDINAHFENYPVKVDISDQYFNMAEKILPLPHIIDIPKRVFAKLDIPANTEPIRGGTDGSQLSFMGLPTPNIFTGCGNFHGPYEYASIDVMEKAVQVIIGIVEDTAENN.

His78 contacts Zn(2+). The active site involves Asp80. Asp140 provides a ligand contact to Zn(2+). Glu174 acts as the Proton acceptor in catalysis. Positions 175, 197, and 379 each coordinate Zn(2+).

Belongs to the peptidase M20B family. The cofactor is Zn(2+).

It is found in the cytoplasm. It carries out the reaction Release of the N-terminal residue from a tripeptide.. In terms of biological role, cleaves the N-terminal amino acid of tripeptides. This Staphylococcus aureus (strain MRSA252) protein is Peptidase T.